The sequence spans 560 residues: DNA ligase B (560 aa).

Residue Lys-124 is the N6-AMP-lysine intermediate of the active site.

The protein belongs to the NAD-dependent DNA ligase family. LigB subfamily.

It catalyses the reaction NAD(+) + (deoxyribonucleotide)n-3'-hydroxyl + 5'-phospho-(deoxyribonucleotide)m = (deoxyribonucleotide)n+m + AMP + beta-nicotinamide D-nucleotide.. Catalyzes the formation of phosphodiester linkages between 5'-phosphoryl and 3'-hydroxyl groups in double-stranded DNA using NAD as a coenzyme and as the energy source for the reaction. The sequence is that of DNA ligase B from Escherichia coli O1:K1 / APEC.